The sequence spans 498 residues: ATP synthase subunit beta, chloroplastic (498 aa).

172–179 is an ATP binding site; that stretch reads GGAGVGKT.

Belongs to the ATPase alpha/beta chains family. As to quaternary structure, F-type ATPases have 2 components, CF(1) - the catalytic core - and CF(0) - the membrane proton channel. CF(1) has five subunits: alpha(3), beta(3), gamma(1), delta(1), epsilon(1). CF(0) has four main subunits: a(1), b(1), b'(1) and c(9-12).

It is found in the plastid. Its subcellular location is the chloroplast thylakoid membrane. It catalyses the reaction ATP + H2O + 4 H(+)(in) = ADP + phosphate + 5 H(+)(out). Its function is as follows. Produces ATP from ADP in the presence of a proton gradient across the membrane. The catalytic sites are hosted primarily by the beta subunits. This Drimys granadensis protein is ATP synthase subunit beta, chloroplastic.